Consider the following 241-residue polypeptide: Fatty acid metabolism regulator protein (241 aa).

An HTH gntR-type domain is found at Gln-11–Ile-79. Positions Glu-39–Gln-58 form a DNA-binding region, H-T-H motif.

In terms of assembly, homodimer.

It is found in the cytoplasm. In terms of biological role, multifunctional regulator of fatty acid metabolism. The protein is Fatty acid metabolism regulator protein of Pasteurella multocida (strain Pm70).